The primary structure comprises 740 residues: Ion-translocating oxidoreductase complex subunit C (740 aa).

4Fe-4S ferredoxin-type domains follow at residues 369–397 (GEPQ…QQLY) and 407–436 (KATT…VQYF). 8 residues coordinate [4Fe-4S] cluster: cysteine 377, cysteine 380, cysteine 383, cysteine 387, cysteine 416, cysteine 419, cysteine 422, and cysteine 426. Positions 602-684 (KLEQQQANAE…EPEEQVDPRK (83 aa)) are disordered. 2 stretches are compositionally biased toward low complexity: residues 605–615 (QQQANAEPEQQ) and 637–647 (QQQANAEPEQQ).

It belongs to the 4Fe4S bacterial-type ferredoxin family. RnfC subfamily. As to quaternary structure, the complex is composed of six subunits: RsxA, RsxB, RsxC, RsxD, RsxE and RsxG. [4Fe-4S] cluster serves as cofactor.

The protein localises to the cell inner membrane. In terms of biological role, part of a membrane-bound complex that couples electron transfer with translocation of ions across the membrane. Required to maintain the reduced state of SoxR. The polypeptide is Ion-translocating oxidoreductase complex subunit C (Escherichia coli O7:K1 (strain IAI39 / ExPEC)).